The sequence spans 412 residues: MHISRLALDHYRSWSQVVVDFVPGVNILFGKNGLGKTNLVEAVEVLSTGSSHRTSSTLPLIERGQTTATIRANVADDAGQTTTYEASIHARGANRARINSGSSLYLRDIIGKIPSVSFTPEDQRLVSGDPGARRTMMNQAAALLEPGYMQTLQQFTRIAKQRATLLKQLNANANNGQPMDAVLSGLEIWTGQFIEAGVVLTRMRAHVISLLAEPFAAIYADLAGAGEQVTLTYAPSFDEVLMFNDPHPQISEHFQRIYPGEVARGVNLIGPQRDDMNLDLAGIPAREFASNGEMWTMALALKMALFEIVRDRLGLQPIVILDDVFAQLDDSRRAQILDFARKQDQVLITVAAEGDVPDYESAHRIDVAALAEPASVILPTLGNLSDLRENESLGKYDGKTAVDSASVERKVS.

30–37 (GKNGLGKT) is a binding site for ATP.

Belongs to the RecF family.

Its subcellular location is the cytoplasm. In terms of biological role, the RecF protein is involved in DNA metabolism; it is required for DNA replication and normal SOS inducibility. RecF binds preferentially to single-stranded, linear DNA. It also seems to bind ATP. The sequence is that of DNA replication and repair protein RecF from Bifidobacterium longum subsp. infantis (strain ATCC 15697 / DSM 20088 / JCM 1222 / NCTC 11817 / S12).